We begin with the raw amino-acid sequence, 276 residues long: MAIKTYKPYTPSRRYITGVSSEDITAKASVRSLLVKLPAHAGRNNNGRITSRHKEAGAKKLYRIIDFKRRKFGIEGKVEAIEYDPYRNCRIALISYRDGEKRYILQPKGLGVGDVVCAAESGLDIKPGNAMKLRNIPVGTIVHNIELKPGKGGQMIRSAGAYAQLMGKEEKYVILRLASGEMRQVLAECMASIGEVGNEEWSNVTIGKAGRNRHRGIRPQTRGSAMNPVDHPHGGGEGKKNSGRHPVTPWGKPTKGAKTRRKKASDKLIISRRKGK.

The disordered stretch occupies residues K208 to K276. Basic and acidic residues predominate over residues D230–K240. Residues K255–K276 are compositionally biased toward basic residues.

This sequence belongs to the universal ribosomal protein uL2 family. Part of the 50S ribosomal subunit. Forms a bridge to the 30S subunit in the 70S ribosome.

One of the primary rRNA binding proteins. Required for association of the 30S and 50S subunits to form the 70S ribosome, for tRNA binding and peptide bond formation. It has been suggested to have peptidyltransferase activity; this is somewhat controversial. Makes several contacts with the 16S rRNA in the 70S ribosome. In Campylobacter lari (strain RM2100 / D67 / ATCC BAA-1060), this protein is Large ribosomal subunit protein uL2.